Reading from the N-terminus, the 308-residue chain is Bifunctional protein FolD (308 aa).

NADP(+) is bound by residues 171–173, Ser198, and Ile239; that span reads GRS.

The protein belongs to the tetrahydrofolate dehydrogenase/cyclohydrolase family. In terms of assembly, homodimer.

It carries out the reaction (6R)-5,10-methylene-5,6,7,8-tetrahydrofolate + NADP(+) = (6R)-5,10-methenyltetrahydrofolate + NADPH. The enzyme catalyses (6R)-5,10-methenyltetrahydrofolate + H2O = (6R)-10-formyltetrahydrofolate + H(+). Its pathway is one-carbon metabolism; tetrahydrofolate interconversion. Catalyzes the oxidation of 5,10-methylenetetrahydrofolate to 5,10-methenyltetrahydrofolate and then the hydrolysis of 5,10-methenyltetrahydrofolate to 10-formyltetrahydrofolate. This chain is Bifunctional protein FolD, found in Borreliella burgdorferi (strain ZS7) (Borrelia burgdorferi).